Here is a 497-residue protein sequence, read N- to C-terminus: Glycerol kinase (497 aa).

Thr12 provides a ligand contact to ADP. Residues Thr12, Thr13, and Ser14 each coordinate ATP. Thr12 is a binding site for sn-glycerol 3-phosphate. An ADP-binding site is contributed by Arg16. 4 residues coordinate sn-glycerol 3-phosphate: Arg82, Glu83, Tyr134, and Asp243. Positions 82, 83, 134, 243, and 244 each coordinate glycerol. ADP-binding residues include Thr265 and Gly308. ATP is bound by residues Thr265, Gly308, Gln312, and Gly411. ADP is bound at residue Gly411.

The protein belongs to the FGGY kinase family.

The enzyme catalyses glycerol + ATP = sn-glycerol 3-phosphate + ADP + H(+). The protein operates within polyol metabolism; glycerol degradation via glycerol kinase pathway; sn-glycerol 3-phosphate from glycerol: step 1/1. With respect to regulation, inhibited by fructose 1,6-bisphosphate (FBP). In terms of biological role, key enzyme in the regulation of glycerol uptake and metabolism. Catalyzes the phosphorylation of glycerol to yield sn-glycerol 3-phosphate. This Rhizobium meliloti (strain 1021) (Ensifer meliloti) protein is Glycerol kinase.